A 385-amino-acid polypeptide reads, in one-letter code: Putative mitochondrial carrier protein TRV_02148.2 (385 aa).

2 Solcar repeats span residues Ser24 to Arg124 and Arg130 to Arg210. 5 consecutive transmembrane segments (helical) span residues Gly30–Leu47, Ala132–Thr150, Trp184–Leu207, Tyr263–Ile279, and Val294–Leu310.

The protein belongs to the mitochondrial carrier (TC 2.A.29) family.

It localises to the mitochondrion inner membrane. Its function is as follows. May function as a mitochondrial transporter. This is Putative mitochondrial carrier protein TRV_02148.2 from Trichophyton verrucosum (strain HKI 0517).